The sequence spans 410 residues: Threonylcarbamoyladenosine tRNA methylthiotransferase MtaB (410 aa).

One can recognise an MTTase N-terminal domain in the interval 1-113 (MKVAFETLGC…LLKILEEYLE (113 aa)). Positions 10, 46, 77, 152, 156, and 159 each coordinate [4Fe-4S] cluster. The Radical SAM core domain occupies 138-366 (YFEGVRPFLK…KELDQKKRQE (229 aa)).

The protein belongs to the methylthiotransferase family. MtaB subfamily. Requires [4Fe-4S] cluster as cofactor.

It is found in the cytoplasm. It catalyses the reaction N(6)-L-threonylcarbamoyladenosine(37) in tRNA + (sulfur carrier)-SH + AH2 + 2 S-adenosyl-L-methionine = 2-methylsulfanyl-N(6)-L-threonylcarbamoyladenosine(37) in tRNA + (sulfur carrier)-H + 5'-deoxyadenosine + L-methionine + A + S-adenosyl-L-homocysteine + 2 H(+). Its function is as follows. Catalyzes the methylthiolation of N6-threonylcarbamoyladenosine (t(6)A), leading to the formation of 2-methylthio-N6-threonylcarbamoyladenosine (ms(2)t(6)A) at position 37 in tRNAs that read codons beginning with adenine. The chain is Threonylcarbamoyladenosine tRNA methylthiotransferase MtaB (mtaB) from Aquifex aeolicus (strain VF5).